The chain runs to 60 residues: Small ribosomal subunit protein eS31 (60 aa).

Zn(2+) is bound by residues Cys-32, Cys-35, Cys-50, and Cys-53. A C4-type zinc finger spans residues 32 to 53; that stretch reads CPRCGAGVFMGEHKDRFSCGKC.

The protein belongs to the eukaryotic ribosomal protein eS31 family. Part of the 30S ribosomal subunit. The cofactor is Zn(2+).

The sequence is that of Small ribosomal subunit protein eS31 from Methanocorpusculum labreanum (strain ATCC 43576 / DSM 4855 / Z).